The sequence spans 263 residues: MTDIRLYMLQSGTLKCKVHNIKMNQGNGADYEIPVPFYLITHPDGHTIIDGGNAIEVATDPRGHWGGICDVYWPVLDKDKGCVDQVKALGFDPAEVRYVVQSHLHLDHTGAIGRFPNATHIVQRAEYEYAFTPDWFAGGGYIRKDFDRPGLKWQFLNGTQDDFYDVYGDGTLTTIFSPGHAMGHQSFLVRLPSSEPLLLTIDAAYTLDHWEEKALPGFLASTVDTVRSVQKLRTIAERTGANVVTGHDPAAWSTFKKAPEYYS.

Zn(2+) contacts are provided by His-103, His-105, Asp-107, His-108, His-180, Asp-202, and His-247.

The protein belongs to the metallo-beta-lactamase superfamily. It depends on Zn(2+) as a cofactor.

The enzyme catalyses an N-acyl-L-homoserine lactone + H2O = an N-acyl-L-homoserine + H(+). The polypeptide is N-acyl homoserine lactonase AttM (Rhizobium johnstonii (strain DSM 114642 / LMG 32736 / 3841) (Rhizobium leguminosarum bv. viciae)).